A 344-amino-acid chain; its full sequence is Protease HtpX homolog (344 aa).

3 helical membrane passes run Val8–Ala28, Ala46–Val66, and Val74–Ala94. Zn(2+) is bound at residue His172. The active site involves Glu173. His176 provides a ligand contact to Zn(2+). 2 consecutive transmembrane segments (helical) span residues Ala183 to Val203 and Leu220 to Phe240. Glu245 contributes to the Zn(2+) binding site.

Belongs to the peptidase M48B family. Zn(2+) serves as cofactor.

The protein localises to the cell membrane. In Pyrobaculum calidifontis (strain DSM 21063 / JCM 11548 / VA1), this protein is Protease HtpX homolog.